A 618-amino-acid polypeptide reads, in one-letter code: Proline--tRNA ligase (618 aa).

It belongs to the class-II aminoacyl-tRNA synthetase family. ProS type 1 subfamily. In terms of assembly, homodimer.

It localises to the cytoplasm. It carries out the reaction tRNA(Pro) + L-proline + ATP = L-prolyl-tRNA(Pro) + AMP + diphosphate. In terms of biological role, catalyzes the attachment of proline to tRNA(Pro) in a two-step reaction: proline is first activated by ATP to form Pro-AMP and then transferred to the acceptor end of tRNA(Pro). As ProRS can inadvertently accommodate and process non-cognate amino acids such as alanine and cysteine, to avoid such errors it has two additional distinct editing activities against alanine. One activity is designated as 'pretransfer' editing and involves the tRNA(Pro)-independent hydrolysis of activated Ala-AMP. The other activity is designated 'posttransfer' editing and involves deacylation of mischarged Ala-tRNA(Pro). The misacylated Cys-tRNA(Pro) is not edited by ProRS. The polypeptide is Proline--tRNA ligase (Streptococcus pyogenes serotype M2 (strain MGAS10270)).